Consider the following 155-residue polypeptide: DNA gyrase inhibitor (155 aa).

Belongs to the DNA gyrase inhibitor family. In terms of assembly, interacts with DNA gyrase.

The protein localises to the cytoplasm. Functionally, inhibits the supercoiling activity of DNA gyrase. Acts by inhibiting DNA gyrase at an early step, prior to (or at the step of) binding of DNA by the gyrase. It protects cells against toxins that target DNA gyrase, by inhibiting activity of these toxins and reducing the formation of lethal double-strand breaks in the cell. The polypeptide is DNA gyrase inhibitor (Erwinia billingiae (strain Eb661)).